The following is a 166-amino-acid chain: UPF0561 protein C2orf68 homolog (166 aa).

A compositionally biased stretch (basic and acidic residues) spans 36 to 49 (RDDYDKKVKQAAKE). Residues 36 to 108 (RDDYDKKVKQ…EPEPPGHQLF (73 aa)) are disordered.

The protein belongs to the UPF0561 family.

This Bos taurus (Bovine) protein is UPF0561 protein C2orf68 homolog.